The primary structure comprises 385 residues: MSWQQRVDDALTARRATDTLRRRYVVSQGAGRWLVANGRQYLNFSSNDYLGLSQHPQIIRAWQQAATRFGVGSGGSGHISGYSVAHQALEEELAQWLGYPRALLFISGFAANQAVITALMKKNDRIVADRLSHASLLEAANLSPAQLRRFIHNDTQHLSRLLQSPCVGQQLVVTEGVYSMDGDSAPLAEIQHIARRHHAWLLVDDAHGIGVTGDEGRGTCWQRGGKPELLVVTFGKGFGVSGAAVLCSESVADYLLQFARHLVYSTSMPPAQAQALSASLAVIRSDEGRERREKLAALVQRFRAGVNASRFTLLNAHSAIQPLIVGDNSRALRLAEALRQQGCWATAIRPPTVPVGTARLRLTLTQAHEACDIDRLLEVLHGAGE.

Arginine 21 serves as a coordination point for substrate. 108–109 (GF) provides a ligand contact to pyridoxal 5'-phosphate. Histidine 133 serves as a coordination point for substrate. Residues serine 179, histidine 207, and threonine 233 each coordinate pyridoxal 5'-phosphate. Lysine 236 is modified (N6-(pyridoxal phosphate)lysine). Threonine 352 contributes to the substrate binding site.

This sequence belongs to the class-II pyridoxal-phosphate-dependent aminotransferase family. BioF subfamily. As to quaternary structure, homodimer. Pyridoxal 5'-phosphate serves as cofactor.

The enzyme catalyses 6-carboxyhexanoyl-[ACP] + L-alanine + H(+) = (8S)-8-amino-7-oxononanoate + holo-[ACP] + CO2. It functions in the pathway cofactor biosynthesis; biotin biosynthesis. Catalyzes the decarboxylative condensation of pimeloyl-[acyl-carrier protein] and L-alanine to produce 8-amino-7-oxononanoate (AON), [acyl-carrier protein], and carbon dioxide. The sequence is that of 8-amino-7-oxononanoate synthase from Salmonella dublin (strain CT_02021853).